A 283-amino-acid chain; its full sequence is Elongation factor Ts (283 aa).

The tract at residues 80 to 83 is involved in Mg(2+) ion dislocation from EF-Tu; that stretch reads TDFV.

Belongs to the EF-Ts family.

The protein resides in the cytoplasm. Its function is as follows. Associates with the EF-Tu.GDP complex and induces the exchange of GDP to GTP. It remains bound to the aminoacyl-tRNA.EF-Tu.GTP complex up to the GTP hydrolysis stage on the ribosome. The sequence is that of Elongation factor Ts from Haemophilus influenzae (strain 86-028NP).